The sequence spans 105 residues: Protein LITTLE ZIPPER 2 (105 aa).

Residues 1–20 are disordered; that stretch reads MCLTTSEPPFPDTDTPTMRS. Residues 39-60 are a coiled coil; sequence NLTRRRRLLKEQKEMEMRNLKL.

As to quaternary structure, interacts with REV.

In terms of biological role, competitive inhibitor of the HD-ZIPIII transcription factors in shoot apical meristem (SAM) development. Acts by forming non-functional heterodimers. Part of a negative feedback loop. Essential for proper functioning of stem cells in the SAM. The sequence is that of Protein LITTLE ZIPPER 2 from Arabidopsis thaliana (Mouse-ear cress).